We begin with the raw amino-acid sequence, 315 residues long: Ribose-phosphate pyrophosphokinase (315 aa).

Residues 37 to 39 (DGE) and 96 to 97 (RQ) contribute to the ATP site. 2 residues coordinate Mg(2+): H131 and D170. Residue K194 is part of the active site. Residues R196, D220, and 224 to 228 (DTGGT) each bind D-ribose 5-phosphate.

Belongs to the ribose-phosphate pyrophosphokinase family. Class I subfamily. As to quaternary structure, homohexamer. Mg(2+) serves as cofactor.

It localises to the cytoplasm. The enzyme catalyses D-ribose 5-phosphate + ATP = 5-phospho-alpha-D-ribose 1-diphosphate + AMP + H(+). It functions in the pathway metabolic intermediate biosynthesis; 5-phospho-alpha-D-ribose 1-diphosphate biosynthesis; 5-phospho-alpha-D-ribose 1-diphosphate from D-ribose 5-phosphate (route I): step 1/1. In terms of biological role, involved in the biosynthesis of the central metabolite phospho-alpha-D-ribosyl-1-pyrophosphate (PRPP) via the transfer of pyrophosphoryl group from ATP to 1-hydroxyl of ribose-5-phosphate (Rib-5-P). In Photorhabdus laumondii subsp. laumondii (strain DSM 15139 / CIP 105565 / TT01) (Photorhabdus luminescens subsp. laumondii), this protein is Ribose-phosphate pyrophosphokinase.